The chain runs to 215 residues: Inositol diphosphatase DSP1 (215 aa).

One can recognise a Tyrosine-protein phosphatase domain in the interval 58-209 (NFSMVDNGIF…VSSFSHIPMS (152 aa)). Residues 114–126 (FGIEGNKEPFVNI) form a WPD loop important for active site topology region. 1D-myo-inositol hexakisphosphate contacts are provided by asparagine 125, isoleucine 126, histidine 129, and lysine 130. The Phosphocysteine intermediate role is filled by cysteine 150.

Belongs to the protein-tyrosine phosphatase family. Atypical dual-specificity phosphatase Siw14-like subfamily. In terms of assembly, homodimer and homohexamer; behaves as a monomer in solution. As to expression, highly expressed in siliques and at lower levels in roots, leaves and flowers.

The catalysed reaction is 5-diphospho-1D-myo-inositol 1,2,3,4,6-pentakisphosphate + H2O = 1D-myo-inositol hexakisphosphate + phosphate + H(+). The enzyme catalyses 1,5-bis(diphospho)-1D-myo-inositol 2,3,4,6-tetrakisphosphate + H2O = 1-diphospho-1D-myo-inositol 2,3,4,5,6-pentakisphosphate + phosphate + 2 H(+). It carries out the reaction 3,5-bis(diphospho)-1D-myo-inositol 1,2,4,6-tetrakisphosphate + H2O = 3-diphospho-1D-myo-inositol 1,2,4,5,6-pentakisphosphate + phosphate + 2 H(+). It catalyses the reaction 6-diphospho-1D-myo-inositol pentakisphosphate + H2O = 1D-myo-inositol hexakisphosphate + phosphate + H(+). The catalysed reaction is 5-diphospho-1D-myo-inositol 1,3,4,6-tetrakisphosphate + H2O = 1D-myo-inositol 1,3,4,5,6-pentakisphosphate + phosphate + H(+). With respect to regulation, inhibited by manganese, calcium and zinc ions but not magnesium ions. In terms of biological role, cleaves the beta-phosphate at the 5-position of soluble inositol pyrophosphates. Has highest activity on 5-diphosphoinositol 1,2,3,4,6-pentakisphosphate (5-InsP(7)), 1,5-bis-diphosphoinositol 2,3,4,6-tetrakisphosphate (1,5-InsP(8)) and 3,5-InsP(8), but has weak activity against 1-diphosphoinositol 2,3,4,5,6-pentakisphosphate (1-InsP(7)). Dephosphorylates the phosphoinositides PI(3,4,5)P3, PI(3,5)P2, but not PI(3)P, PI(3,4)P2 or PI(4,5)P2. Possesses phosphotyrosine phosphatase activity in vitro, and can hydrolyze para-nitrophenyl phosphate, O-methylfluorescein phosphate, polyphosphate and ATP. The polypeptide is Inositol diphosphatase DSP1 (Arabidopsis thaliana (Mouse-ear cress)).